A 361-amino-acid polypeptide reads, in one-letter code: tRNA pseudouridine synthase D (361 aa).

Aspartate 76 acts as the Nucleophile in catalysis. Residues 151–318 (GIPNYFGYQR…EQGSRRLAWI (168 aa)) form the TRUD domain.

The protein belongs to the pseudouridine synthase TruD family.

The catalysed reaction is uridine(13) in tRNA = pseudouridine(13) in tRNA. Functionally, responsible for synthesis of pseudouridine from uracil-13 in transfer RNAs. The chain is tRNA pseudouridine synthase D from Wolinella succinogenes (strain ATCC 29543 / DSM 1740 / CCUG 13145 / JCM 31913 / LMG 7466 / NCTC 11488 / FDC 602W) (Vibrio succinogenes).